A 587-amino-acid chain; its full sequence is GATA zinc finger domain-containing protein 3 (587 aa).

Residues 53-74 (NINNNINNNNNNNNNNNNNNIN) show a composition bias toward low complexity. 3 disordered regions span residues 53-141 (NINN…LKIP), 179-294 (QLAH…SSPS), and 312-392 (QTSP…ATIN). The span at 75–86 (QYHQNHYDQYSD) shows a compositional bias: polar residues. Low complexity-rich tracts occupy residues 87-136 (NNCN…NNNN), 183-202 (NSSM…TPTS), 237-264 (NING…INNG), 272-292 (GNNN…NSSS), and 316-333 (SQQS…QQSQ). Polar residues-rich tracts occupy residues 340-358 (INTT…TNSP) and 365-379 (NESS…TPLS). The segment at 500-525 (CIFCGTMETPEWRKGPGGHKTLCNAC) adopts a GATA-type zinc-finger fold. Residues 536–587 (ENQNNGGSPNPQQNNVTTTTTTTTSTSTNSPNSNGNNFSPESAMSVSKLISD) are disordered. Low complexity predominate over residues 538–575 (QNNGGSPNPQQNNVTTTTTTTTSTSTNSPNSNGNNFSP). Positions 577–587 (SAMSVSKLISD) are enriched in polar residues.

The protein is GATA zinc finger domain-containing protein 3 (gtaC) of Dictyostelium discoideum (Social amoeba).